We begin with the raw amino-acid sequence, 268 residues long: MLELRLVQGSLLKKVLESLKDLVTDANFDCSASGFSLQAMDSSHVALVALLLRSEGFEHYRCDRNPSMGMNLNNMAKMLKCAGNDDIITLKADDGSDTVTFMFESPTQDKISDFEMKLMDIDSEHLGIPEAEYHAIVRMPSAEFARICKDLSSIGDTVVISVTKEGVKFSTRGDIGTANIVCRQNTTVDKPDEATIIEMNEPVSLTFALRYLNSFTKATPLSNNVTISLSSELPVVVEYKIAEMGYIRFYLAPKIEEDDEEQSLEYQA.

A DNA-binding region spans residues 61–80; sequence RCDRNPSMGMNLNNMAKMLK.

It belongs to the PCNA family.

It is found in the nucleus. This protein is an auxiliary protein of DNA polymerase delta and is involved in the control of eukaryotic DNA replication by increasing the polymerase's processibility during elongation of the leading strand. The protein is Proliferating cell nuclear antigen of Catharanthus roseus (Madagascar periwinkle).